The chain runs to 317 residues: Melanocyte-stimulating hormone receptor (317 aa).

The Extracellular segment spans residues Met1–Glu37. N-linked (GlcNAc...) asparagine glycans are attached at residues Asn15 and Asn29. Residues Val38–Ile63 form a helical membrane-spanning segment. Over Ala64 to Pro72 the chain is Cytoplasmic. The helical transmembrane segment at Met73–Leu93 threads the bilayer. At Glu94–Asn118 the chain is on the extracellular side. Residues Ile119–Met140 traverse the membrane as a helical segment. Residues Asp141 to Trp163 are Cytoplasmic-facing. The helical transmembrane segment at Ala164–Tyr183 threads the bilayer. Residues Asp184–Cys191 are Extracellular-facing. Residues Leu192–Leu211 traverse the membrane as a helical segment. Over Thr212–Ala240 the chain is Cytoplasmic. The helical transmembrane segment at Ala241–Val266 threads the bilayer. Topologically, residues Cys267–Asn279 are extracellular. The chain crosses the membrane as a helical span at residues Phe280 to Phe300. The Cytoplasmic segment spans residues Arg301 to Trp317.

This sequence belongs to the G-protein coupled receptor 1 family. As to quaternary structure, interacts with MGRN1, but does not undergo MGRN1-mediated ubiquitination; this interaction competes with GNAS-binding and thus inhibits agonist-induced cAMP production. Interacts with OPN3; the interaction results in a decrease in MC1R-mediated cAMP signaling and ultimately a decrease in melanin production in melanocytes.

It localises to the cell membrane. Receptor for MSH (alpha, beta and gamma) and ACTH. The activity of this receptor is mediated by G proteins which activate adenylate cyclase. Mediates melanogenesis, the production of eumelanin (black/brown) and phaeomelanin (red/yellow), via regulation of cAMP signaling in melanocytes. In Loris tardigradus (Slender loris), this protein is Melanocyte-stimulating hormone receptor (MC1R).